A 499-amino-acid chain; its full sequence is Lanosterol 14-alpha demethylase (499 aa).

A helical transmembrane segment spans residues 13–35 (SAVLQMSLTSVLLTASVFTLTLG). Position 441 (Cys-441) interacts with heme.

It belongs to the cytochrome P450 family. It depends on heme as a cofactor. Strongly expressed in intestine. Moderately expressed in liver, with higher levels in females compared to males. Also detected at low levels in brain, eye, kidney and testis.

It is found in the endoplasmic reticulum membrane. The protein localises to the membrane. The enzyme catalyses a 14alpha-methyl steroid + 3 reduced [NADPH--hemoprotein reductase] + 3 O2 = a Delta(14) steroid + formate + 3 oxidized [NADPH--hemoprotein reductase] + 4 H2O + 4 H(+). The catalysed reaction is lanosterol + 3 reduced [NADPH--hemoprotein reductase] + 3 O2 = 4,4-dimethyl-5alpha-cholesta-8,14,24-trien-3beta-ol + formate + 3 oxidized [NADPH--hemoprotein reductase] + 4 H2O + 4 H(+). It carries out the reaction 24,25-dihydrolanosterol + 3 reduced [NADPH--hemoprotein reductase] + 3 O2 = 4,4-dimethyl-8,14-cholestadien-3beta-ol + formate + 3 oxidized [NADPH--hemoprotein reductase] + 4 H2O + 4 H(+). It catalyses the reaction a 14alpha-methyl steroid + reduced [NADPH--hemoprotein reductase] + O2 = a 14alpha-hydroxymethyl steroid + oxidized [NADPH--hemoprotein reductase] + H2O + H(+). The enzyme catalyses a 14alpha-hydroxymethyl steroid + reduced [NADPH--hemoprotein reductase] + O2 = a 14alpha-formyl steroid + oxidized [NADPH--hemoprotein reductase] + 2 H2O + H(+). The catalysed reaction is a 14alpha-formyl steroid + reduced [NADPH--hemoprotein reductase] + O2 = a Delta(14) steroid + formate + oxidized [NADPH--hemoprotein reductase] + H2O + 2 H(+). It carries out the reaction lanosterol + reduced [NADPH--hemoprotein reductase] + O2 = 32-hydroxylanosterol + oxidized [NADPH--hemoprotein reductase] + H2O + H(+). It catalyses the reaction 32-hydroxylanosterol + reduced [NADPH--hemoprotein reductase] + O2 = 32-oxolanosterol + oxidized [NADPH--hemoprotein reductase] + 2 H2O + H(+). The enzyme catalyses 32-oxolanosterol + reduced [NADPH--hemoprotein reductase] + O2 = 4,4-dimethyl-5alpha-cholesta-8,14,24-trien-3beta-ol + formate + oxidized [NADPH--hemoprotein reductase] + H2O + 2 H(+). The catalysed reaction is 24,25-dihydrolanosterol + reduced [NADPH--hemoprotein reductase] + O2 = 32-hydroxy-24,25-dihydrolanosterol + oxidized [NADPH--hemoprotein reductase] + H2O + H(+). It carries out the reaction 32-hydroxy-24,25-dihydrolanosterol + reduced [NADPH--hemoprotein reductase] + O2 = 32-oxo-24,25-dihydrolanosterol + oxidized [NADPH--hemoprotein reductase] + 2 H2O + H(+). It catalyses the reaction 32-oxo-24,25-dihydrolanosterol + reduced [NADPH--hemoprotein reductase] + O2 = 4,4-dimethyl-8,14-cholestadien-3beta-ol + formate + oxidized [NADPH--hemoprotein reductase] + H2O + 2 H(+). The protein operates within steroid biosynthesis; zymosterol biosynthesis; zymosterol from lanosterol: step 1/6. With respect to regulation, inhibited by ketoconazole. May also be inhibited to a lesser extent by propiconazole. Sterol 14alpha-demethylase that plays a critical role in the cholesterol biosynthesis pathway, being cholesterol the major sterol component in deuterostome membranes as well as a precursor for steroid hormone synthesis. Cytochrome P450 monooxygenase that catalyzes the three-step oxidative removal of the 14alpha-methyl group (C-32) of sterols such as lanosterol (lanosta-8,24-dien-3beta-ol) and 24,25-dihydrolanosterol (DHL) in the form of formate, and converts the sterols to 4,4-dimethyl-5alpha-cholesta-8,14,24-trien-3beta-ol and 4,4-dimethyl-8,14-cholestadien-3beta-ol, respectively, which are intermediates of cholesterol biosynthesis. Can also demethylate substrates not intrinsic to deuterostomes, such as eburicol (24-methylene-24,25-dihydrolanosterol), but at a lower rate than DHL. The chain is Lanosterol 14-alpha demethylase from Danio rerio (Zebrafish).